The chain runs to 459 residues: Argininosuccinate lyase (459 aa).

It belongs to the lyase 1 family. Argininosuccinate lyase subfamily.

It localises to the cytoplasm. It catalyses the reaction 2-(N(omega)-L-arginino)succinate = fumarate + L-arginine. Its pathway is amino-acid biosynthesis; L-arginine biosynthesis; L-arginine from L-ornithine and carbamoyl phosphate: step 3/3. This is Argininosuccinate lyase from Lactococcus lactis subsp. cremoris (strain MG1363).